We begin with the raw amino-acid sequence, 116 residues long: Large ribosomal subunit protein uL18 (116 aa).

This sequence belongs to the universal ribosomal protein uL18 family. Part of the 50S ribosomal subunit; part of the 5S rRNA/L5/L18/L25 subcomplex. Contacts the 5S and 23S rRNAs.

In terms of biological role, this is one of the proteins that bind and probably mediate the attachment of the 5S RNA into the large ribosomal subunit, where it forms part of the central protuberance. This Shewanella amazonensis (strain ATCC BAA-1098 / SB2B) protein is Large ribosomal subunit protein uL18.